A 122-amino-acid chain; its full sequence is Large ribosomal subunit protein bL12 (122 aa).

The protein belongs to the bacterial ribosomal protein bL12 family. In terms of assembly, homodimer. Part of the ribosomal stalk of the 50S ribosomal subunit. Forms a multimeric L10(L12)X complex, where L10 forms an elongated spine to which 2 to 4 L12 dimers bind in a sequential fashion. Binds GTP-bound translation factors.

Functionally, forms part of the ribosomal stalk which helps the ribosome interact with GTP-bound translation factors. Is thus essential for accurate translation. The protein is Large ribosomal subunit protein bL12 of Sodalis glossinidius (strain morsitans).